Reading from the N-terminus, the 247-residue chain is Geranylgeranylglyceryl phosphate synthase (247 aa).

Residues D23 and S52 each coordinate Mg(2+). Residues 171–177 (YLEAGSG), 203–204 (GG), and 225–226 (GT) each bind sn-glycerol 1-phosphate.

The protein belongs to the GGGP/HepGP synthase family. Group II subfamily. Mg(2+) is required as a cofactor.

It is found in the cytoplasm. The enzyme catalyses sn-glycerol 1-phosphate + (2E,6E,10E)-geranylgeranyl diphosphate = sn-3-O-(geranylgeranyl)glycerol 1-phosphate + diphosphate. The protein operates within membrane lipid metabolism; glycerophospholipid metabolism. Prenyltransferase that catalyzes the transfer of the geranylgeranyl moiety of geranylgeranyl diphosphate (GGPP) to the C3 hydroxyl of sn-glycerol-1-phosphate (G1P). This reaction is the first ether-bond-formation step in the biosynthesis of archaeal membrane lipids. This is Geranylgeranylglyceryl phosphate synthase from Methanosarcina acetivorans (strain ATCC 35395 / DSM 2834 / JCM 12185 / C2A).